Consider the following 312-residue polypeptide: uncharacterized protein (312 aa).

Residue 112–118 (LIGLPMV) participates in ATP binding.

This sequence belongs to the MurCDEF family.

This is an uncharacterized protein from Methanothermobacter thermautotrophicus (strain ATCC 29096 / DSM 1053 / JCM 10044 / NBRC 100330 / Delta H) (Methanobacterium thermoautotrophicum).